A 368-amino-acid chain; its full sequence is Quinolinate synthase (368 aa).

Iminosuccinate-binding residues include His-46 and Ser-63. Cys-110 contacts [4Fe-4S] cluster. Residues 141-143 and Ser-162 each bind iminosuccinate; that span reads YVN. Cys-230 contributes to the [4Fe-4S] cluster binding site. Residues 256 to 258 and Thr-273 each bind iminosuccinate; that span reads HPE. Residue Cys-320 participates in [4Fe-4S] cluster binding.

The protein belongs to the quinolinate synthase family. Type 3 subfamily. [4Fe-4S] cluster is required as a cofactor.

It is found in the cytoplasm. The catalysed reaction is iminosuccinate + dihydroxyacetone phosphate = quinolinate + phosphate + 2 H2O + H(+). The protein operates within cofactor biosynthesis; NAD(+) biosynthesis; quinolinate from iminoaspartate: step 1/1. In terms of biological role, catalyzes the condensation of iminoaspartate with dihydroxyacetone phosphate to form quinolinate. The polypeptide is Quinolinate synthase (Bacillus cereus (strain ZK / E33L)).